Here is a 500-residue protein sequence, read N- to C-terminus: NAD(P)H-quinone oxidoreductase chain 4, chloroplastic (500 aa).

The next 15 membrane-spanning stretches (helical) occupy residues F4–L24, Y35–F55, I87–V107, L113–S130, L134–M154, F167–L187, I211–H231, H242–V262, A272–A292, I305–D325, G330–G350, M364–A384, L386–T406, F411–I431, and L462–V482.

This sequence belongs to the complex I subunit 4 family.

The protein localises to the plastid. The protein resides in the chloroplast thylakoid membrane. It catalyses the reaction a plastoquinone + NADH + (n+1) H(+)(in) = a plastoquinol + NAD(+) + n H(+)(out). It carries out the reaction a plastoquinone + NADPH + (n+1) H(+)(in) = a plastoquinol + NADP(+) + n H(+)(out). The polypeptide is NAD(P)H-quinone oxidoreductase chain 4, chloroplastic (Capsella bursa-pastoris (Shepherd's purse)).